Consider the following 651-residue polypeptide: Gag-Pro polyprotein (651 aa).

The N-myristoyl glycine; by host moiety is linked to residue Gly2. Residues 93–142 (QIPSRPAPPPPSSSTHDPPDSDPQIPPPYVEPTAPQVLPVMHPHGAPPNH) form a disordered region. At Ser105 the chain carries Phosphoserine; by host MAPK1. Residues 118-121 (PPPY) carry the PPXY motif motif. The PTAP/PSAP motif motif lies at 124-127 (PTAP). 2 consecutive CCHC-type zinc fingers follow at residues 355-372 (QPCF…DCTQ) and 378-395 (GPCP…DCPR). The Peptidase A2 domain occupies 476–554 (IEALLDTGAD…NNWAIIGRDA (79 aa)). Asp481 functions as the For protease activity; shared with dimeric partner in the catalytic mechanism. A disordered region spans residues 631–651 (SQLKKPMEPGDSSTTCGPLTL). Residues 641–651 (DSSTTCGPLTL) are compositionally biased toward polar residues.

As to quaternary structure, homodimer; the homodimers are part of the immature particles. Interacts with human TSG101 and NEDD4; these interactions are essential for budding and release of viral particles. In terms of assembly, homodimer; further assembles as homohexamers. Post-translationally, specific enzymatic cleavages by the viral protease yield mature proteins. The polyprotein is cleaved during and after budding, this process is termed maturation. The protease is autoproteolytically processed at its N- and C-termini. In terms of processing, phosphorylation of the matrix protein p19 by MAPK1 seems to play a role in budding. Myristoylated. Myristoylation of the matrix (MA) domain mediates the transport and binding of Gag polyproteins to the host plasma membrane and is required for the assembly of viral particles.

The protein localises to the virion. Functionally, the matrix domain targets Gag, Gag-Pro and Gag-Pro-Pol polyproteins to the plasma membrane via a multipartite membrane binding signal, that includes its myristoylated N-terminus. In terms of biological role, matrix protein. Forms the spherical core of the virus that encapsulates the genomic RNA-nucleocapsid complex. Its function is as follows. Binds strongly to viral nucleic acids and promote their aggregation. Also destabilizes the nucleic acids duplexes via highly structured zinc-binding motifs. Functionally, the aspartyl protease mediates proteolytic cleavages of Gag and Gag-Pol polyproteins during or shortly after the release of the virion from the plasma membrane. Cleavages take place as an ordered, step-wise cascade to yield mature proteins. This process is called maturation. Displays maximal activity during the budding process just prior to particle release from the cell (Potential). Cleaves the translation initiation factor eIF4G leading to the inhibition of host cap-dependent translation. This Human T-cell leukemia virus 1 (isolate Caribbea HS-35 subtype A) (HTLV-1) protein is Gag-Pro polyprotein (gag-pro).